A 66-amino-acid chain; its full sequence is Large ribosomal subunit protein uL29 (66 aa).

This sequence belongs to the universal ribosomal protein uL29 family.

The protein is Large ribosomal subunit protein uL29 of Francisella philomiragia subsp. philomiragia (strain ATCC 25017 / CCUG 19701 / FSC 153 / O#319-036).